Reading from the N-terminus, the 64-residue chain is Large ribosomal subunit protein bL35 (64 aa).

The protein belongs to the bacterial ribosomal protein bL35 family.

The protein is Large ribosomal subunit protein bL35 of Pseudomonas entomophila (strain L48).